The sequence spans 185 residues: Translocon-associated protein subunit gamma (185 aa).

Met-1 bears the N-acetylmethionine mark. Residues 1–27 (MAPKGSCKQQSEEDLLLQDFSRNLSAK) are Lumenal-facing. The residue at position 11 (Ser-11) is a Phosphoserine. A helical transmembrane segment spans residues 28–48 (SSALFFGNAFIVSAIPIWLYW). Residues 49–54 (RIWHMD) are Cytoplasmic-facing. Residues 55-76 (LIQSAVLYSVMTLVSTYLVAFA) traverse the membrane as a helical segment. Residues 77-135 (YKNVKFVLKHKVAQKREDAVSKEVTRKLSEADNRKMSRKEKDERILWKKNEVADYEATT) are Lumenal-facing. Position 105 is a phosphoserine (Ser-105). The chain crosses the membrane as a helical span at residues 136–157 (FSIFYNNTLFLVVVIVASFFIL). Over 158–163 (KNFNPT) the chain is Cytoplasmic. Residues 164–184 (VNYILSISASSGLIALLSTGS) traverse the membrane as a helical segment.

The protein belongs to the TRAP-gamma family. In terms of assembly, heterotetramer of TRAP-alpha, TRAP-beta, TRAP-delta and TRAP-gamma.

The protein resides in the endoplasmic reticulum membrane. Functionally, TRAP proteins are part of a complex whose function is to bind calcium to the ER membrane and thereby regulate the retention of ER resident proteins. The polypeptide is Translocon-associated protein subunit gamma (SSR3) (Pongo abelii (Sumatran orangutan)).